The primary structure comprises 445 residues: UPF0210 protein SUB1511 (445 aa).

The protein belongs to the UPF0210 family. In terms of assembly, homodimer.

The sequence is that of UPF0210 protein SUB1511 from Streptococcus uberis (strain ATCC BAA-854 / 0140J).